Consider the following 860-residue polypeptide: Transforming growth factor-beta receptor-associated protein 1 (860 aa).

One can recognise a CNH domain in the interval 24 to 297 (HISIECVECC…HILQDFEGRV (274 aa)). A CHCR repeat occupies 564 to 732 (RPLDEQQQTS…YLRAGPSAQD (169 aa)).

It belongs to the TRAP1 family. As to quaternary structure, interacts with TGFBR2 and ACVR2B; in the absence of ligand stimulation. Interacts with TGFBR1, ACVRL1, BMPR1A and ACVR1B; in the absence of ligand stimulation and to a less extent. Interacts with SMAD4; the interaction seems to be mutually exclusive with the interaction of SMAD4 and phosphorylated SMAD2. May interact with ALOX5. Interacts with RAB5C. Interacts with VPS8, VPS11 and VPS16. Component of the putative class C core vacuole/endosome tethering (CORVET) complex; the core of which composed of the class C Vps proteins VPS11, VPS16, VPS18 and VPS33A, is associated with VPS8 and TGFBRAP1.

The protein resides in the cytoplasm. It is found in the early endosome. Plays a role in the TGF-beta/activin signaling pathway. It associates with inactive heteromeric TGF-beta and activin receptor complexes, mainly through the type II receptor, and is released upon activation of signaling. May recruit SMAD4 to the vicinity of the receptor complex and facilitate its interaction with receptor-regulated Smads, such as SMAD2. Functionally, plays a role in vesicle-mediated protein trafficking of the endocytic membrane transport pathway. Believed to act as a component of the putative CORVET endosomal tethering complexes which is proposed to be involved in the Rab5-to-Rab7 endosome conversion probably implicating MON1A/B, and via binding SNAREs and SNARE complexes to mediate tethering and docking events during SNARE-mediated membrane fusion. The CORVET complex is proposed to function as a Rab5 effector to mediate early endosome fusion probably in specific endosome subpopulations. Functions predominantly in APPL1-containing endosomes and in degradative but not recycling trafficking of endocytosed cargo. This Mus musculus (Mouse) protein is Transforming growth factor-beta receptor-associated protein 1 (Tgfbrap1).